Reading from the N-terminus, the 525-residue chain is Coronin-2A (525 aa).

5 WD repeats span residues 80 to 120, 130 to 170, 178 to 217, 220 to 263, and 269 to 308; these read GHRG…LTKN, GHAR…SVIM, CHQD…VLQE, YKGH…VPVT, and GSSG…PHLN. Residues 485-524 are a coiled coil; the sequence is QMFYRQQDEIRRLRELVTQREVQAKQLELEIRNLRMNSPR.

It belongs to the WD repeat coronin family. In terms of assembly, binds actin. Component of the N-Cor repressor complex, at least composed of NCOR1, NCOR2, HDAC3, TBL1X, TBL1R, CORO2A and GPS2.

In Bos taurus (Bovine), this protein is Coronin-2A (CORO2A).